The sequence spans 177 residues: Ribosome maturation factor RimM (177 aa).

The 82-residue stretch at 96 to 177 (DNEFYWVDLI…KITVDWGLDY (82 aa)) folds into the PRC barrel domain.

It belongs to the RimM family. In terms of assembly, binds ribosomal protein uS19.

Its subcellular location is the cytoplasm. Functionally, an accessory protein needed during the final step in the assembly of 30S ribosomal subunit, possibly for assembly of the head region. Essential for efficient processing of 16S rRNA. May be needed both before and after RbfA during the maturation of 16S rRNA. It has affinity for free ribosomal 30S subunits but not for 70S ribosomes. This Herminiimonas arsenicoxydans protein is Ribosome maturation factor RimM.